We begin with the raw amino-acid sequence, 233 residues long: Maternal B9.15 protein (233 aa).

A disordered region spans residues Lys135–Asn165.

This sequence belongs to the BTG family.

In Xenopus laevis (African clawed frog), this protein is Maternal B9.15 protein.